An 87-amino-acid polypeptide reads, in one-letter code: Small ribosomal subunit protein bS20 (87 aa).

It belongs to the bacterial ribosomal protein bS20 family.

Functionally, binds directly to 16S ribosomal RNA. This Lachnoclostridium phytofermentans (strain ATCC 700394 / DSM 18823 / ISDg) (Clostridium phytofermentans) protein is Small ribosomal subunit protein bS20.